The chain runs to 518 residues: Putative transposase for insertion sequence IS408 (518 aa).

The 84-residue stretch at 11 to 94 folds into the HTH IS408-type domain; that stretch reads LKEVLRLKWA…PDYTALHREL (84 aa). Positions 23 to 44 form a DNA-binding region, H-T-H motif; sequence LTHRQISRAIGISVGAVSKFAA. The Integrase catalytic domain occupies 140-335; sequence QQHRAGEKLF…LPVRRYEIAT (196 aa). Residues 496 to 518 form a disordered region; that stretch reads LPTTPAEWRSPEHENVRGPDYYH. Over residues 504–518 the composition is skewed to basic and acidic residues; it reads RSPEHENVRGPDYYH.

It belongs to the transposase IS21/IS408/IS1162 family.

Required for the transposition of the insertion element. This Burkholderia multivorans (strain ATCC 17616 / 249) protein is Putative transposase for insertion sequence IS408.